The following is a 195-amino-acid chain: Glycine-rich protein A3 (195 aa).

2 disordered regions span residues 23 to 103 and 159 to 182; these read AGGG…GVAG and VMES…GSNL. A compositionally biased stretch (gly residues) spans 47-77; sequence PAGGGYPPQGYPPAGGGYPPQGYPPAGGGYP. Residues 82-94 show a composition bias toward low complexity; that stretch reads PPAGHHSGSSAPH. Over residues 163-175 the composition is skewed to basic and acidic residues; that stretch reads LSRESTGRARSTD.

This Daucus carota (Wild carrot) protein is Glycine-rich protein A3.